The following is a 211-amino-acid chain: Uracil phosphoribosyltransferase (211 aa).

Residues R78, R103, and 130-138 contribute to the 5-phospho-alpha-D-ribose 1-diphosphate site; that span reads DPMLATGNS. Residues I193 and 198-200 each bind uracil; that span reads GDA. D199 contributes to the 5-phospho-alpha-D-ribose 1-diphosphate binding site.

It belongs to the UPRTase family. It depends on Mg(2+) as a cofactor.

The enzyme catalyses UMP + diphosphate = 5-phospho-alpha-D-ribose 1-diphosphate + uracil. It functions in the pathway pyrimidine metabolism; UMP biosynthesis via salvage pathway; UMP from uracil: step 1/1. With respect to regulation, allosterically activated by GTP. Its function is as follows. Catalyzes the conversion of uracil and 5-phospho-alpha-D-ribose 1-diphosphate (PRPP) to UMP and diphosphate. The sequence is that of Uracil phosphoribosyltransferase from Acinetobacter baumannii (strain ATCC 17978 / DSM 105126 / CIP 53.77 / LMG 1025 / NCDC KC755 / 5377).